The following is a 520-amino-acid chain: Cytosol aminopeptidase (520 aa).

Zn(2+) is bound by residues L200, M201, K280, and D285. Substrate is bound by residues K280, D285, S290, and K292. D285 provides a ligand contact to Mg(2+). K292 is a catalytic residue. Positions 301, 303, 362, and 364 each coordinate Zn(2+). The substrate site is built by D303 and D362. The Mg(2+) site is built by D362 and E364. The active site involves R366.

This sequence belongs to the peptidase M17 family. Homohexamer. Zn(2+) serves as cofactor. It depends on Mn(2+) as a cofactor.

It is found in the cytoplasm. It catalyses the reaction Release of an N-terminal amino acid, Xaa-|-Yaa-, in which Xaa is preferably Leu, but may be other amino acids including Pro although not Arg or Lys, and Yaa may be Pro. Amino acid amides and methyl esters are also readily hydrolyzed, but rates on arylamides are exceedingly low.. The enzyme catalyses an S-substituted L-cysteinylglycine + H2O = an S-substituted L-cysteine + glycine. The catalysed reaction is L-cysteinylglycine + H2O = L-cysteine + glycine. It carries out the reaction S-benzyl-L-cysteinylglycine + H2O = S-benzyl-L-cysteine + glycine. It catalyses the reaction Release of N-terminal proline from a peptide.. Functionally, cytosolic metallopeptidase that catalyzes the removal of unsubstituted N-terminal hydrophobic amino acids from various peptides. The presence of Zn(2+) ions is essential for the peptidase activity, and the association with other cofactors can modulate the substrate spectificity of the enzyme. For instance, in the presence of Mn(2+), it displays a specific Cys-Gly hydrolyzing activity of Cys-Gly-S-conjugates. Involved in the metabolism of glutathione and in the degradation of glutathione S-conjugates, which may play a role in the control of the cell redox status. The chain is Cytosol aminopeptidase (lap3) from Xenopus tropicalis (Western clawed frog).